Here is a 97-residue protein sequence, read N- to C-terminus: YcgL domain-containing protein PSEEN4034 (97 aa).

The YcgL domain occupies 3–87; the sequence is RICSIYKSPR…PDDDYIEHLP (85 aa).

This Pseudomonas entomophila (strain L48) protein is YcgL domain-containing protein PSEEN4034.